Consider the following 277-residue polypeptide: Zinc finger protein 511 (277 aa).

C2H2-type zinc fingers lie at residues 96-121 (FRCHIAGCKQLFDTLEGYEHHYNALH), 123-146 (NVCSNCKRSFPSNRLLEIHILEWH), and 160-185 (YECLVEGCGLKFKTSKERKDHLIRTH). Positions 225–244 (ESSESMDFSLTPEPVETEPM) are disordered.

Belongs to the krueppel C2H2-type zinc-finger protein family.

The protein resides in the nucleus. Its function is as follows. May be involved in transcriptional regulation. The polypeptide is Zinc finger protein 511 (znf511) (Danio rerio (Zebrafish)).